The following is a 214-amino-acid chain: Single-pass membrane and coiled-coil domain-containing protein 1 (214 aa).

Residues 6-42 (TTLISLKEAMKRVDHKLQALETQFKELDFTKDNLMQK) adopt a coiled-coil conformation. A helical membrane pass occupies residues 65 to 81 (ALQLTSMELNILYSYVI).

The protein resides in the membrane. This is Single-pass membrane and coiled-coil domain-containing protein 1 (SMCO1) from Homo sapiens (Human).